The following is a 1129-amino-acid chain: MACLTMANIEGSATATVHQNGDILGNTSAPKQTEPLLQVYLYYSPGKTGGDYLQFPAGEYVAEEICIVACKACGIMPVYHNMFALMSETERVWYPPNHIFHVDEATRLKLLYRIRFYFPHWYCNGTSRACRYGIIRGSESPVLDDLVMSYLFAQWRKDFLDGWIQMPVTHETQEECLGMAVLDMMRVAKEKDQTPLAVYNSVSYKMFLPKCVRAKIQEYHILTRKRIRYRFRKFIQQFGQCKATARNLKLKYLINLETLQSAFYSEVFEVKEPGGDPSGEESFATIVITGNGGIQCSRGKLKNCETLAEQDLQTYCDFPDIIDVSIKQASQEGSSERRIVTIHKQDSKNLEAEFQSLREALSFVSLIDGYYRLTADAHHYLCKEVAPPSVLENIQSNCHGPIFMDFAINKLKKAGNQTGFYVLRCSPKDFKKYFLTFAIERENATDYKHCLITKNENGEYNLSGTKRSFGNLKDLLTCYQTETVRSDSIIFQFIKCCPPKPKDKSNLLVFRSNSVSDVPSSPTLQRHNVSQMVFHKIRNEDLIFEESLGQGTFTKIFKGIRKEVGDYGQLHQTEVLLKVLDKVHRNYSESFFEAASMMSQLSYKHLVLNYGVCVCGEENILVQEYVKFGSLDTYLKKNKNVINILWKLEVAKQLALAMHFLEDKGLVHGNVCAKNILLIREEDRKSGNLPFIKLSDPGISITVLPRDILLERIPWVPPECIENPRQLSLATDKWSFGTTLWEICSGGDKPLSALDSSRKLQFYEDRHQLPAPNWTELANLINNCMDYEPDFRPSFRAIIRDLNSLFTPDYELLTENDMLPNIRTGALGFSGAFEDRDPTQFEERHLKFLQQLGKGNFGSVEMCRYDPLQDNTGEVVAVKKLQHSTEEHLRDFEREIEILKSLQHDNIVKYKGVCYSAGRRNLRLIMEYLPYGSLRDYLQKHKERLDHKKLLLYASQICKGMEYLGTKRYVHRDLATRNILVENENRVKIGDFGLTKVLPQDKEYYKVKEPGESPIFWYAPESLTESKFSVASDVWSFGVVLYELFTYIEKSKSPPAEFMRMIGNDKQGQMIVFHLIELLKNNGRLPRPDGCPDEIYAIMKECWNNNVAQRPTFRDLAQRVDQIRDNMGG.

Residues 35 to 378 (PLLQVYLYYS…GYYRLTADAH (344 aa)) form the FERM domain. Tyr117 bears the Phosphotyrosine; by autocatalysis mark. The 82-residue stretch at 399–480 (HGPIFMDFAI…NLKDLLTCYQ (82 aa)) folds into the SH2; atypical domain. Protein kinase domains follow at residues 542 to 806 (LIFE…NSLF) and 846 to 1118 (LKFL…DLAQ). 852–860 (LGKGNFGSV) contributes to the ATP binding site. At Tyr865 the chain carries Phosphotyrosine; by autocatalysis. Position 879 (Lys879) interacts with ATP. Tyr963 and Tyr969 each carry phosphotyrosine; by autocatalysis. Asp973 acts as the Proton acceptor in catalysis. Phosphotyrosine; by autocatalysis is present on residues Tyr1004 and Tyr1005.

The protein belongs to the protein kinase superfamily. Tyr protein kinase family. JAK subfamily. In terms of processing, autophosphorylated, leading to regulate its activity.

The protein resides in the endomembrane system. It is found in the nucleus. It catalyses the reaction L-tyrosyl-[protein] + ATP = O-phospho-L-tyrosyl-[protein] + ADP + H(+). Its activity is regulated as follows. Regulated by autophosphorylation, can both activate or decrease activity. Heme regulates its activity by enhancing the phosphorylation on Tyr-1004 and Tyr-1005. Its function is as follows. Non-receptor tyrosine kinase involved in various processes such as cell growth, development, differentiation or histone modifications. Mediates essential signaling events in both innate and adaptive immunity. In the cytoplasm, plays a pivotal role in signal transduction via its association with cytokine receptors. Following ligand-binding to cell surface receptors, phosphorylates specific tyrosine residues on the cytoplasmic tails of the receptor, creating docking sites for STATs proteins. Subsequently, phosphorylates the STATs proteins once they are recruited to the receptor. Phosphorylated STATs then form homodimer or heterodimers and translocate to the nucleus to activate gene transcription. For example, cell stimulation with erythropoietin (EPO) during erythropoiesis leads to JAK2 autophosphorylation, activation, and its association with erythropoietin receptor (EPOR) that becomes phosphorylated in its cytoplasmic domain. Then, STAT5 (STAT5A or STAT5B) is recruited, phosphorylated and activated by JAK2. Once activated, dimerized STAT5 translocates into the nucleus and promotes the transcription of several essential genes involved in the modulation of erythropoiesis. Part of a signaling cascade that is activated by increased cellular retinol and that leads to the activation of STAT5 (STAT5A or STAT5B). In the nucleus, plays a key role in chromatin by specifically mediating phosphorylation of 'Tyr-41' of histone H3 (H3Y41ph), a specific tag that promotes exclusion of CBX5 (HP1 alpha) from chromatin. Up-regulates the potassium voltage-gated channel activity of KCNA3. In Gallus gallus (Chicken), this protein is Tyrosine-protein kinase JAK2.